The sequence spans 411 residues: Probable tRNA pseudouridine synthase D (411 aa).

The active-site Nucleophile is D81. The region spanning 154-375 (GTPNFFGLQR…SGSYRPADTL (222 aa)) is the TRUD domain.

The protein belongs to the pseudouridine synthase TruD family.

It carries out the reaction uridine(13) in tRNA = pseudouridine(13) in tRNA. Its function is as follows. Could be responsible for synthesis of pseudouridine from uracil-13 in transfer RNAs. The polypeptide is Probable tRNA pseudouridine synthase D (Archaeoglobus fulgidus (strain ATCC 49558 / DSM 4304 / JCM 9628 / NBRC 100126 / VC-16)).